We begin with the raw amino-acid sequence, 372 residues long: GTP cyclohydrolase 1 type 2 homolog (372 aa).

5 residues coordinate a divalent metal cation: His-67, His-68, Asp-106, His-332, and Glu-335.

The protein belongs to the GTP cyclohydrolase I type 2/NIF3 family. As to quaternary structure, homohexamer.

This is GTP cyclohydrolase 1 type 2 homolog from Halalkalibacterium halodurans (strain ATCC BAA-125 / DSM 18197 / FERM 7344 / JCM 9153 / C-125) (Bacillus halodurans).